A 566-amino-acid polypeptide reads, in one-letter code: 15-cis-phytoene desaturase, chloroplastic/chromoplastic (566 aa).

Residues 1 to 86 (MVVFGNVSAA…ASLSASFRSA (86 aa)) constitute a chloroplast and chromoplast transit peptide. FAD contacts are provided by residues alanine 103, 122 to 123 (EA), lysine 130, 147 to 148 (HI), and tyrosine 153. Residue arginine 288 coordinates substrate. Residues isoleucine 330 and aspartate 519 each coordinate FAD. Alanine 527 contributes to the substrate binding site. Methionine 529 is a binding site for FAD.

The protein belongs to the carotenoid/retinoid oxidoreductase family. As to quaternary structure, homotetramer. FAD serves as cofactor.

Its subcellular location is the plastid. The protein resides in the chloroplast. It is found in the chromoplast. It localises to the membrane. The enzyme catalyses 2 a plastoquinone + 15-cis-phytoene = 9,9',15-tri-cis-zeta-carotene + 2 a plastoquinol. It functions in the pathway carotenoid biosynthesis; lycopene biosynthesis. Converts phytoene into zeta-carotene via the intermediary of phytofluene by the symmetrical introduction of two double bonds at the C-11 and C-11' positions of phytoene with a concomitant isomerization of two neighboring double bonds at the C9 and C9' positions from trans to cis. This Arabidopsis thaliana (Mouse-ear cress) protein is 15-cis-phytoene desaturase, chloroplastic/chromoplastic (PDS).